The sequence spans 59 residues: UPF0509 protein KPK_3153 (59 aa).

It belongs to the UPF0509 family.

This is UPF0509 protein KPK_3153 from Klebsiella pneumoniae (strain 342).